A 466-amino-acid chain; its full sequence is 3-isopropylmalate dehydratase large subunit (466 aa).

3 residues coordinate [4Fe-4S] cluster: Cys-347, Cys-407, and Cys-410.

It belongs to the aconitase/IPM isomerase family. LeuC type 1 subfamily. Heterodimer of LeuC and LeuD. It depends on [4Fe-4S] cluster as a cofactor.

It carries out the reaction (2R,3S)-3-isopropylmalate = (2S)-2-isopropylmalate. The protein operates within amino-acid biosynthesis; L-leucine biosynthesis; L-leucine from 3-methyl-2-oxobutanoate: step 2/4. Functionally, catalyzes the isomerization between 2-isopropylmalate and 3-isopropylmalate, via the formation of 2-isopropylmaleate. The chain is 3-isopropylmalate dehydratase large subunit from Escherichia coli (strain 55989 / EAEC).